The primary structure comprises 645 residues: DNA ligase (645 aa).

NAD(+)-binding positions include 30-34, 79-80, and glutamate 106; these read DDEYD and SM. The active-site N6-AMP-lysine intermediate is the lysine 108. Arginine 129, glutamate 163, and lysine 302 together coordinate NAD(+). Residues cysteine 396, cysteine 399, cysteine 412, and cysteine 417 each contribute to the Zn(2+) site. In terms of domain architecture, BRCT spans 570 to 645; sequence LKTNIFSGKT…IDESEYESLK (76 aa).

It belongs to the NAD-dependent DNA ligase family. LigA subfamily. It depends on Mg(2+) as a cofactor. Requires Mn(2+) as cofactor.

It catalyses the reaction NAD(+) + (deoxyribonucleotide)n-3'-hydroxyl + 5'-phospho-(deoxyribonucleotide)m = (deoxyribonucleotide)n+m + AMP + beta-nicotinamide D-nucleotide.. Functionally, DNA ligase that catalyzes the formation of phosphodiester linkages between 5'-phosphoryl and 3'-hydroxyl groups in double-stranded DNA using NAD as a coenzyme and as the energy source for the reaction. It is essential for DNA replication and repair of damaged DNA. The chain is DNA ligase from Campylobacter fetus subsp. fetus (strain 82-40).